Reading from the N-terminus, the 142-residue chain is Large ribosomal subunit protein uL13 (142 aa).

This sequence belongs to the universal ribosomal protein uL13 family. As to quaternary structure, part of the 50S ribosomal subunit.

In terms of biological role, this protein is one of the early assembly proteins of the 50S ribosomal subunit, although it is not seen to bind rRNA by itself. It is important during the early stages of 50S assembly. The polypeptide is Large ribosomal subunit protein uL13 (Pseudomonas fluorescens (strain Pf0-1)).